An 870-amino-acid polypeptide reads, in one-letter code: Probable inorganic carbon transporter subunit DabA (870 aa).

4 residues coordinate Zn(2+): Cys381, Asp383, His564, and Cys579.

This sequence belongs to the inorganic carbon transporter (TC 9.A.2) DabA family. As to quaternary structure, forms a complex with DabB. It depends on Zn(2+) as a cofactor.

The protein resides in the cell membrane. Its function is as follows. Part of an energy-coupled inorganic carbon pump. The sequence is that of Probable inorganic carbon transporter subunit DabA from Geobacillus kaustophilus (strain HTA426).